A 394-amino-acid polypeptide reads, in one-letter code: 1-deoxy-D-xylulose 5-phosphate reductoisomerase (394 aa).

The NADPH site is built by threonine 10, glycine 11, serine 12, isoleucine 13, asparagine 38, and asparagine 125. Lysine 126 is a binding site for 1-deoxy-D-xylulose 5-phosphate. Glutamate 127 is an NADPH binding site. Aspartate 151 serves as a coordination point for Mn(2+). Residues serine 152, glutamate 153, serine 182, and histidine 205 each coordinate 1-deoxy-D-xylulose 5-phosphate. Glutamate 153 is a binding site for Mn(2+). Glycine 211 contributes to the NADPH binding site. 1-deoxy-D-xylulose 5-phosphate is bound by residues serine 218, asparagine 223, lysine 224, and glutamate 227. Residue glutamate 227 participates in Mn(2+) binding.

This sequence belongs to the DXR family. It depends on Mg(2+) as a cofactor. Mn(2+) serves as cofactor.

It catalyses the reaction 2-C-methyl-D-erythritol 4-phosphate + NADP(+) = 1-deoxy-D-xylulose 5-phosphate + NADPH + H(+). The protein operates within isoprenoid biosynthesis; isopentenyl diphosphate biosynthesis via DXP pathway; isopentenyl diphosphate from 1-deoxy-D-xylulose 5-phosphate: step 1/6. Functionally, catalyzes the NADPH-dependent rearrangement and reduction of 1-deoxy-D-xylulose-5-phosphate (DXP) to 2-C-methyl-D-erythritol 4-phosphate (MEP). This is 1-deoxy-D-xylulose 5-phosphate reductoisomerase from Methylococcus capsulatus (strain ATCC 33009 / NCIMB 11132 / Bath).